The primary structure comprises 323 residues: Prenyl transferase (323 aa).

The isopentenyl diphosphate site is built by lysine 46, arginine 49, and histidine 81. Positions 88 and 92 each coordinate Mg(2+). Arginine 97 lines the an all-trans-polyprenyl diphosphate pocket. Residue arginine 98 participates in isopentenyl diphosphate binding. Residues lysine 174, threonine 175, and glutamine 212 each coordinate an all-trans-polyprenyl diphosphate.

This sequence belongs to the FPP/GGPP synthase family. It depends on Mg(2+) as a cofactor.

It localises to the plastid. It is found in the cyanelle. In terms of biological role, possible role in synthesis of the nonaprenyl side chain of plastoquinone or in synthesis of other prenyl chains such as undekaprenyl pyrophosphate. The protein is Prenyl transferase (preA) of Cyanophora paradoxa.